The following is a 156-amino-acid chain: ATP synthase subunit b (156 aa).

A helical membrane pass occupies residues 7 to 29 (LLGQAISFLLFVWFCMKFVWPPL).

The protein belongs to the ATPase B chain family. As to quaternary structure, F-type ATPases have 2 components, F(1) - the catalytic core - and F(0) - the membrane proton channel. F(1) has five subunits: alpha(3), beta(3), gamma(1), delta(1), epsilon(1). F(0) has three main subunits: a(1), b(2) and c(10-14). The alpha and beta chains form an alternating ring which encloses part of the gamma chain. F(1) is attached to F(0) by a central stalk formed by the gamma and epsilon chains, while a peripheral stalk is formed by the delta and b chains.

Its subcellular location is the cell inner membrane. In terms of biological role, f(1)F(0) ATP synthase produces ATP from ADP in the presence of a proton or sodium gradient. F-type ATPases consist of two structural domains, F(1) containing the extramembraneous catalytic core and F(0) containing the membrane proton channel, linked together by a central stalk and a peripheral stalk. During catalysis, ATP synthesis in the catalytic domain of F(1) is coupled via a rotary mechanism of the central stalk subunits to proton translocation. Its function is as follows. Component of the F(0) channel, it forms part of the peripheral stalk, linking F(1) to F(0). In Shewanella halifaxensis (strain HAW-EB4), this protein is ATP synthase subunit b.